A 69-amino-acid polypeptide reads, in one-letter code: uncharacterized protein (69 aa).

This is an uncharacterized protein from Escherichia coli O6:H1 (strain CFT073 / ATCC 700928 / UPEC).